The sequence spans 323 residues: Aspartate carbamoyltransferase catalytic subunit (323 aa).

The carbamoyl phosphate site is built by R68 and T69. K96 is an L-aspartate binding site. R118, H148, and Q151 together coordinate carbamoyl phosphate. The L-aspartate site is built by R181 and R236. 2 residues coordinate carbamoyl phosphate: G277 and P278.

The protein belongs to the aspartate/ornithine carbamoyltransferase superfamily. ATCase family. In terms of assembly, heterododecamer (2C3:3R2) of six catalytic PyrB chains organized as two trimers (C3), and six regulatory PyrI chains organized as three dimers (R2).

It catalyses the reaction carbamoyl phosphate + L-aspartate = N-carbamoyl-L-aspartate + phosphate + H(+). It participates in pyrimidine metabolism; UMP biosynthesis via de novo pathway; (S)-dihydroorotate from bicarbonate: step 2/3. In terms of biological role, catalyzes the condensation of carbamoyl phosphate and aspartate to form carbamoyl aspartate and inorganic phosphate, the committed step in the de novo pyrimidine nucleotide biosynthesis pathway. In Verminephrobacter eiseniae (strain EF01-2), this protein is Aspartate carbamoyltransferase catalytic subunit.